Reading from the N-terminus, the 421-residue chain is Signal recognition particle receptor FtsY (421 aa).

Over residues 1–10 the composition is skewed to basic residues; sequence MFSFFRRKKK. Residues 1 to 22 are disordered; the sequence is MFSFFRRKKKQETPAPEEAQIQ. GTP is bound by residues 228–235, 309–313, and 373–376; these read GINGAGKT, DTAGR, and TKLD.

It belongs to the GTP-binding SRP family. FtsY subfamily. In terms of assembly, part of the signal recognition particle protein translocation system, which is composed of SRP and FtsY. SRP is a ribonucleoprotein composed of Ffh and a 4.5S RNA molecule.

It is found in the cell membrane. Its subcellular location is the cytoplasm. It catalyses the reaction GTP + H2O = GDP + phosphate + H(+). Functionally, involved in targeting and insertion of nascent membrane proteins into the cytoplasmic membrane. Acts as a receptor for the complex formed by the signal recognition particle (SRP) and the ribosome-nascent chain (RNC). Interaction with SRP-RNC leads to the transfer of the RNC complex to the Sec translocase for insertion into the membrane, the hydrolysis of GTP by both Ffh and FtsY, and the dissociation of the SRP-FtsY complex into the individual components. The protein is Signal recognition particle receptor FtsY of Neisseria meningitidis serogroup C.